A 413-amino-acid polypeptide reads, in one-letter code: Phosphoglycerate kinase (413 aa).

Substrate-binding positions include 19 to 21 (DLN), arginine 34, 57 to 60 (HQSK), arginine 114, and arginine 154. Residues glutamate 332 and 358-361 (GGHS) each bind ATP.

Belongs to the phosphoglycerate kinase family. As to quaternary structure, monomer.

Its subcellular location is the cytoplasm. The catalysed reaction is (2R)-3-phosphoglycerate + ATP = (2R)-3-phospho-glyceroyl phosphate + ADP. It functions in the pathway carbohydrate degradation; glycolysis; pyruvate from D-glyceraldehyde 3-phosphate: step 2/5. The chain is Phosphoglycerate kinase from Thermococcus sibiricus (strain DSM 12597 / MM 739).